The sequence spans 185 residues: Thymidine kinase (185 aa).

Residues 10-17 (GPMYSGKT) and 83-86 (DEVQ) contribute to the ATP site. The active-site Proton acceptor is the E84. The Zn(2+) site is built by C140, C143, C173, and C176.

This sequence belongs to the thymidine kinase family. In terms of assembly, homotetramer.

It localises to the cytoplasm. The catalysed reaction is thymidine + ATP = dTMP + ADP + H(+). This chain is Thymidine kinase, found in Pseudothermotoga lettingae (strain ATCC BAA-301 / DSM 14385 / NBRC 107922 / TMO) (Thermotoga lettingae).